The sequence spans 139 residues: GATA transcription factor 16 (139 aa).

A GATA-type zinc finger spans residues 32–86 (NDKKKTCADCGTSKTPLWRGGPVGPKSLCNACGIRNRKKRRGGTEDNKKLKKSSS). The interval 67–98 (NRKKRRGGTEDNKKLKKSSSGGGNRKFGESLK) is disordered.

Belongs to the type IV zinc-finger family. Class B subfamily.

The protein localises to the nucleus. In terms of biological role, transcriptional regulator that specifically binds 5'-GATA-3' or 5'-GAT-3' motifs within gene promoters. In Arabidopsis thaliana (Mouse-ear cress), this protein is GATA transcription factor 16 (GATA16).